The chain runs to 88 residues: Cytochrome c oxidase subunit 6B2 (88 aa).

The disordered stretch occupies residues 1-22 (MLDVEAQEPPKGKWSTPPFDPR). A CHCH domain is found at 29-75 (IRNCYQNFLDYHRCLKTRTRRGKSTQPCEYYFRVYHSLCPISWVESW). A Cx9C motif motif is present at residues 32-42 (CYQNFLDYHRC). 2 disulfides stabilise this stretch: Cys-32-Cys-67 and Cys-42-Cys-56. The Cx10C motif motif lies at 56–67 (CEYYFRVYHSLC).

The protein belongs to the cytochrome c oxidase subunit 6B family. As to quaternary structure, component of the cytochrome c oxidase (complex IV, CIV), a multisubunit enzyme composed of 14 subunits. The complex is composed of a catalytic core of 3 subunits MT-CO1, MT-CO2 and MT-CO3, encoded in the mitochondrial DNA, and 11 supernumerary subunits COX4I1 (or COX4I2), COX5A, COX5B, COX6A1 (or COX6A2), COX6B1 (or COX6B2), COX6C, COX7A2 (or COX7A1), COX7B, COX7C, COX8A and NDUFA4, which are encoded in the nuclear genome. The complex exists as a monomer or a dimer and forms supercomplexes (SCs) in the inner mitochondrial membrane with NADH-ubiquinone oxidoreductase (complex I, CI) and ubiquinol-cytochrome c oxidoreductase (cytochrome b-c1 complex, complex III, CIII), resulting in different assemblies (supercomplex SCI(1)III(2)IV(1) and megacomplex MCI(2)III(2)IV(2)). Testis specific. Weak expression in thymus and heart. Expressed in cancer cell lines.

It localises to the mitochondrion inner membrane. It participates in energy metabolism; oxidative phosphorylation. In terms of biological role, component of the cytochrome c oxidase, the last enzyme in the mitochondrial electron transport chain which drives oxidative phosphorylation. The respiratory chain contains 3 multisubunit complexes succinate dehydrogenase (complex II, CII), ubiquinol-cytochrome c oxidoreductase (cytochrome b-c1 complex, complex III, CIII) and cytochrome c oxidase (complex IV, CIV), that cooperate to transfer electrons derived from NADH and succinate to molecular oxygen, creating an electrochemical gradient over the inner membrane that drives transmembrane transport and the ATP synthase. Cytochrome c oxidase is the component of the respiratory chain that catalyzes the reduction of oxygen to water. Electrons originating from reduced cytochrome c in the intermembrane space (IMS) are transferred via the dinuclear copper A center (CU(A)) of subunit 2 and heme A of subunit 1 to the active site in subunit 1, a binuclear center (BNC) formed by heme A3 and copper B (CU(B)). The BNC reduces molecular oxygen to 2 water molecules using 4 electrons from cytochrome c in the IMS and 4 protons from the mitochondrial matrix. The sequence is that of Cytochrome c oxidase subunit 6B2 (COX6B2) from Homo sapiens (Human).